The sequence spans 151 residues: Testis-expressed protein 29 (151 aa).

The Extracellular segment spans residues 1-56 (MEYVLEVKNSPRHLLKQFTVCDVPLYDICDYNVSRDRCQELGCCFYEGVCYKKAVP). The helical transmembrane segment at 57–77 (IYIHVFSALIVIIAGAFVITI) threads the bilayer. At 78 to 151 (IYRVIQESRK…TITEAEETED (74 aa)) the chain is on the cytoplasmic side. Positions 100–151 (KSSEKAELASSSSKLGLKPASPGPPSAGPSMKSDEDKDDVTGTITEAEETED) are disordered. Over residues 107–119 (LASSSSKLGLKPA) the composition is skewed to low complexity.

It localises to the membrane. This chain is Testis-expressed protein 29 (TEX29), found in Homo sapiens (Human).